The primary structure comprises 947 residues: Translation initiation factor IF-2 (947 aa).

The tract at residues 61–284 (IQANQPAKNP…TAKNNKSHKI (224 aa)) is disordered. The segment covering 151–169 (QIEKAKQKLQEIQKSREAL) has biased composition (basic and acidic residues). The segment covering 175-188 (SNANNANSTNNANN) has biased composition (low complexity). Basic and acidic residues predominate over residues 189 to 206 (AKKEISEVKKQEQEIKRH). Residues 207 to 218 (ENIKRRTGFRVI) are compositionally biased toward basic residues. Basic and acidic residues predominate over residues 247-262 (EDIKKEWQEKDKQEAK). Residues 446 to 615 (ERPPVVTIMG…LIQADIMELK (170 aa)) form the tr-type G domain. The interval 455–462 (GHVDHGKT) is G1. 455–462 (GHVDHGKT) is a binding site for GTP. Residues 480–484 (GITQH) are G2. The segment at 501-504 (DTPG) is G3. GTP-binding positions include 501 to 505 (DTPGH) and 555 to 558 (NKMD). The G4 stretch occupies residues 555-558 (NKMD). The interval 591–593 (SAK) is G5.

This sequence belongs to the TRAFAC class translation factor GTPase superfamily. Classic translation factor GTPase family. IF-2 subfamily.

It localises to the cytoplasm. In terms of biological role, one of the essential components for the initiation of protein synthesis. Protects formylmethionyl-tRNA from spontaneous hydrolysis and promotes its binding to the 30S ribosomal subunits. Also involved in the hydrolysis of GTP during the formation of the 70S ribosomal complex. This chain is Translation initiation factor IF-2, found in Helicobacter pylori (strain P12).